The chain runs to 103 residues: Large ribosomal subunit protein uL24 (103 aa).

The protein belongs to the universal ribosomal protein uL24 family. In terms of assembly, part of the 50S ribosomal subunit.

In terms of biological role, one of two assembly initiator proteins, it binds directly to the 5'-end of the 23S rRNA, where it nucleates assembly of the 50S subunit. Functionally, one of the proteins that surrounds the polypeptide exit tunnel on the outside of the subunit. This is Large ribosomal subunit protein uL24 from Syntrophomonas wolfei subsp. wolfei (strain DSM 2245B / Goettingen).